A 1610-amino-acid chain; its full sequence is Voltage-dependent L-type calcium channel subunit alpha-1D (1610 aa).

The disordered stretch occupies residues 1–99 (MMMMMMKKMQ…SKKQGNSSNS (99 aa)). The Cytoplasmic portion of the chain corresponds to 1–125 (MMMMMMKKMQ…RACISIVEWK (125 aa)). Polar residues predominate over residues 37–51 (GPTSQPNSSKQTVLS). Residues 53–66 (QAAIDAARQAKAAQ) show a composition bias toward low complexity. The span at 81–92 (QRKRQQYAKSKK) shows a compositional bias: basic residues. One copy of the I repeat lies at 112–408 (NPIRRACISI…LVLGVLSGEF (297 aa)). Residues 126 to 144 (PFDIFILLAIFANCVALAI) form a helical membrane-spanning segment. Topologically, residues 145–162 (YIPFPEDDSNSTNHNLEK) are extracellular. The N-linked (GlcNAc...) asparagine glycan is linked to Asn154. Residues 163–182 (VEYAFLIIFTVETFLKIIAY) form a helical membrane-spanning segment. The Cytoplasmic segment spans residues 183–194 (GLLLHPNAYVRN). A helical membrane pass occupies residues 195 to 213 (GWNLLDFVIVIVGLFSVIL). Over 214-234 (EQLTKETEGGNHSSGKSGGFD) the chain is Extracellular. Asn224 is a glycosylation site (N-linked (GlcNAc...) asparagine). Residues 235-253 (VKALRAFRVLRPLRLVSGV) form a helical membrane-spanning segment. The Cytoplasmic segment spans residues 254–272 (PSLQVVLNSIIKAMVPLLH). Residues 273-292 (IALLVLFVIIIYAIIGLELF) traverse the membrane as a helical segment. Topologically, residues 293-380 (IGKMHKTCFF…WMNDAMGFEL (88 aa)) are extracellular. N-linked (GlcNAc...) asparagine glycosylation occurs at Asn328. Glu363 serves as a coordination point for Ca(2+). A helical membrane pass occupies residues 381-405 (PWVYFVSLVIFGSFFVLNLVLGVLS). Residues 406 to 522 (GEFSKEREKA…RRCRAAVKSV (117 aa)) are Cytoplasmic-facing. The segment at 428–445 (EQLEEDLKGYLDWITQAE) is binding to the beta subunit. The disordered stretch occupies residues 448-487 (DPENEEEGGEEGKRNTSMPTSETESVNTENVSGEGETQGS). The span at 462–487 (NTSMPTSETESVNTENVSGEGETQGS) shows a compositional bias: polar residues. The stretch at 508–754 (NRFNRRRCRA…VFLAIAVDNL (247 aa)) is one II repeat. Residues 523–542 (TFYWLVIVLVFLNTLTISSE) traverse the membrane as a helical segment. Residues 543 to 557 (HYNQPDWLTQIQDIA) are Extracellular-facing. Residues 558–576 (NKVLLALFTCEMLVKMYSL) form a helical membrane-spanning segment. Residues 577–584 (GLQAYFVS) lie on the Cytoplasmic side of the membrane. The helical transmembrane segment at 585–603 (LFNRFDCFVVCGGITETIL) threads the bilayer. Over 604-613 (VELELMSPLG) the chain is Extracellular. The helical transmembrane segment at 614–632 (VSVFRCVRLLRIFKVTRHW) threads the bilayer. At 633-651 (TSLSNLVASLLNSMKSIAS) the chain is on the cytoplasmic side. The helical transmembrane segment at 652-672 (LLLLLFLFIIIFSLLGMQLFG) threads the bilayer. Topologically, residues 673–726 (GKFNFDETQTKRSTFDNFPQALLTVFQILTGEDWNAVMYDGIMAYGGPSSSGMI) are extracellular. Residue Glu704 coordinates Ca(2+). A helical transmembrane segment spans residues 727–751 (VCIYFIILFICGNYILLNVFLAIAV). Over 752–884 (DNLADAESLN…VGCHKLINHH (133 aa)) the chain is Cytoplasmic. Residues 765 to 789 (KEEAEEKERKKIARKESLENKKNNK) show a composition bias toward basic and acidic residues. Residues 765 to 846 (KEEAEEKERK…VPAGPRPRRI (82 aa)) form a disordered region. Residues 790–801 (PEVNQIANSDNK) are compositionally biased toward polar residues. The segment covering 824–836 (VGEEEEEEEEEPE) has biased composition (acidic residues). The stretch at 871–1153 (NPIRVGCHKL…IFVGFVIVTF (283 aa)) is one III repeat. The chain crosses the membrane as a helical span at residues 885–903 (IFTNLILVFIMLSSAALAA). Over 904 to 919 (EDPIRSHSFRNTILGY) the chain is Extracellular. Residues 920 to 939 (FDYAFTAIFTVEILLKMTTF) traverse the membrane as a helical segment. The Cytoplasmic segment spans residues 940 to 951 (GAFLHKGAFCRN). Residues 952-970 (YFNLLDMLVVGVSLVSFGI) traverse the membrane as a helical segment. Residues 971 to 976 (QSSAIS) lie on the Extracellular side of the membrane. A helical membrane pass occupies residues 977–996 (VVKILRVLRVLRPLRAINRA). The Cytoplasmic segment spans residues 997-1015 (KGLKHVVQCVFVAIRTIGN). A helical transmembrane segment spans residues 1016 to 1035 (IMIVTTLLQFMFACIGVQLF). The Extracellular portion of the chain corresponds to 1036–1125 (KGKFYRCTDE…AGPVYNHRVE (90 aa)). A dihydropyridine binding region spans residues 1073–1163 (RIWQNSDFNF…QEQGEKEYKN (91 aa)). Residue Glu1099 participates in Ca(2+) binding. Residues 1126 to 1146 (ISIFFIIYIIIVAFFMMNIFV) traverse the membrane as a helical segment. The Cytoplasmic segment spans residues 1147–1203 (GFVIVTFQEQGEKEYKNCELDKNQRQCVEYALKARPLRRYIPKNPYQYKFWYVVNSS). The stretch at 1190-1465 (NPYQYKFWYV…LFVAVIMDNF (276 aa)) is one IV repeat. The helical transmembrane segment at 1204-1222 (PFEYMMFVLIMLNTLCLAM) threads the bilayer. The Extracellular portion of the chain corresponds to 1223-1237 (QHYEQSKMFNDAMDI). Residues 1238–1257 (LNMVFTGVFTVEMVLKVIAF) traverse the membrane as a helical segment. Topologically, residues 1258–1264 (KPKGYFS) are cytoplasmic. The helical transmembrane segment at 1265–1286 (DAWNTFDSLIVIGSIIDVALSE) threads the bilayer. At 1287-1311 (ADPTESESLPLPTATPGNSEESNRI) the chain is on the extracellular side. A helical membrane pass occupies residues 1312–1331 (SITFFRLFRVMRLVKLLSRG). Over 1332–1350 (EGIRTLLWTFIKSFQALPY) the chain is Cytoplasmic. A helical membrane pass occupies residues 1351–1370 (VALLIAMLFFIYAVIGMQMF). The Extracellular segment spans residues 1371-1437 (GKVAMRDNNQ…GEEYTCGSNF (67 aa)). Positions 1418-1484 (LCDPDSDYNP…LGPHHLDEFK (67 aa)) are dihydropyridine binding. A phenylalkylamine binding region spans residues 1430 to 1473 (EYTCGSNFAIVYFISFYMLCAFLIINLFVAVIMDNFDYLTRDWS). A helical membrane pass occupies residues 1438–1462 (AIVYFISFYMLCAFLIINLFVAVIM). The Cytoplasmic segment spans residues 1463–1610 (DNFDYLTRDW…CFLSPSRSRS (148 aa)).

The protein belongs to the calcium channel alpha-1 subunit (TC 1.A.1.11) family. CACNA1D subfamily. Voltage-dependent calcium channels are multisubunit complexes, consisting of alpha-1, alpha-2, beta and delta subunits in a 1:1:1:1 ratio. The channel activity is directed by the pore-forming and voltage-sensitive alpha-1 subunit. In many cases, this subunit is sufficient to generate voltage-sensitive calcium channel activity. The auxiliary subunits beta and alpha-2/delta linked by a disulfide bridge regulate the channel activity. Interacts with RIMBP2. Interacts with CABP1 and CABP4, resulting in a near elimination of calcium-dependent inactivation of the channel. As to expression, expressed in brain, heart and skeletal muscle.

The protein localises to the membrane. The catalysed reaction is Ca(2+)(in) = Ca(2+)(out). In terms of biological role, voltage-sensitive calcium channels (VSCC) mediate the entry of calcium ions into excitable cells and are also involved in a variety of calcium-dependent processes, including muscle contraction, hormone or neurotransmitter release, gene expression, cell motility, cell division and cell death. The isoform alpha-1D gives rise to L-type calcium currents. Long-lasting (L-type) calcium channels belong to the 'high-voltage activated' (HVA) group. They are blocked by dihydropyridines (DHP), phenylalkylamines, and by benzothiazepines. This chain is Voltage-dependent L-type calcium channel subunit alpha-1D (CACNA1D), found in Mesocricetus auratus (Golden hamster).